The chain runs to 173 residues: Ferritin-1 heavy chain (173 aa).

Residues 6–155 (QNYHEECEAG…DYITNLIRVG (150 aa)) form the Ferritin-like diiron domain. The Fe cation site is built by E23, E58, H61, E103, and Q137.

Belongs to the ferritin family. In terms of assembly, oligomer of 24 subunits. The functional molecule forms a roughly spherical shell with a diameter of 12 nm and contains a central cavity into which the insoluble mineral iron core is deposited.

The enzyme catalyses 4 Fe(2+) + O2 + 4 H(+) = 4 Fe(3+) + 2 H2O. Functionally, stores iron in a soluble, non-toxic, readily available form. Important for iron homeostasis. Has ferroxidase activity. Iron is taken up in the ferrous form and deposited as ferric hydroxides after oxidation. The polypeptide is Ferritin-1 heavy chain (SCM-1) (Schistosoma mansoni (Blood fluke)).